A 345-amino-acid polypeptide reads, in one-letter code: Tryptophan--tRNA ligase (345 aa).

ATP is bound by residues 22-24 and 30-31; these read QPS and GN. Positions 23 to 31 match the 'HIGH' region motif; it reads PSGELTIGN. Aspartate 146 contacts L-tryptophan. Residues 158-160, valine 197, and 206-210 each bind ATP; these read GID and KMSKS. Positions 206-210 match the 'KMSKS' region motif; it reads KMSKS.

This sequence belongs to the class-I aminoacyl-tRNA synthetase family. As to quaternary structure, homodimer.

Its subcellular location is the cytoplasm. The catalysed reaction is tRNA(Trp) + L-tryptophan + ATP = L-tryptophyl-tRNA(Trp) + AMP + diphosphate + H(+). Catalyzes the attachment of tryptophan to tRNA(Trp). This Photorhabdus laumondii subsp. laumondii (strain DSM 15139 / CIP 105565 / TT01) (Photorhabdus luminescens subsp. laumondii) protein is Tryptophan--tRNA ligase.